Here is a 323-residue protein sequence, read N- to C-terminus: tRNA U34 carboxymethyltransferase (323 aa).

Residues Lys93, Trp107, Lys112, Gly132, 154–156, 182–183, Met197, Tyr201, and Arg316 contribute to the carboxy-S-adenosyl-L-methionine site; these read DPS and VE.

It belongs to the class I-like SAM-binding methyltransferase superfamily. CmoB family. Homotetramer.

The enzyme catalyses carboxy-S-adenosyl-L-methionine + 5-hydroxyuridine(34) in tRNA = 5-carboxymethoxyuridine(34) in tRNA + S-adenosyl-L-homocysteine + H(+). In terms of biological role, catalyzes carboxymethyl transfer from carboxy-S-adenosyl-L-methionine (Cx-SAM) to 5-hydroxyuridine (ho5U) to form 5-carboxymethoxyuridine (cmo5U) at position 34 in tRNAs. The polypeptide is tRNA U34 carboxymethyltransferase (Pseudoalteromonas atlantica (strain T6c / ATCC BAA-1087)).